The sequence spans 282 residues: Undecaprenyl-diphosphatase (282 aa).

Helical transmembrane passes span 1 to 21 (MTLFESIVLGVVQGLTEFLPV), 40 to 60 (GAAFTAVVQLGTLAAVLIYFY), 85 to 105 (AAMGWMIAVGTLPIVICGLLF), 117 to 137 (YWVSGALIGFALLLLVAEWSV), 196 to 216 (FSFLLSLPSVFAAALFELYHT), 229 to 249 (AITAATITAGITGYLSIAFLI), and 258 to 278 (SIFIIYRIILGAGILSLIAAG).

Belongs to the UppP family.

The protein resides in the cell inner membrane. The catalysed reaction is di-trans,octa-cis-undecaprenyl diphosphate + H2O = di-trans,octa-cis-undecaprenyl phosphate + phosphate + H(+). Catalyzes the dephosphorylation of undecaprenyl diphosphate (UPP). Confers resistance to bacitracin. This is Undecaprenyl-diphosphatase from Chlorobium phaeobacteroides (strain DSM 266 / SMG 266 / 2430).